Reading from the N-terminus, the 626-residue chain is Lysine--tRNA ligase, cytoplasmic (626 aa).

Met-1 is modified (N-acetylmethionine). 2 stretches are compositionally biased toward polar residues: residues 1-11 (MEGAADQTTKA) and 18-27 (DSSTTLNAAE). Residues 1-84 (MEGAADQTTK…QKAVAADDEE (84 aa)) are disordered. Residues 37–69 (RSKNALKKEQKMKQKEEEKRRKDEEKAEKAKQA) adopt a coiled-coil conformation. The segment covering 42–67 (LKKEQKMKQKEEEKRRKDEEKAEKAK) has biased composition (basic and acidic residues). Low complexity predominate over residues 69-78 (APKASSQKAV). A DNA-binding region (OB) is located at residues 141–217 (SLAGRIMSKR…RGELSIFPRS (77 aa)). 2 residues coordinate substrate: Gly-313 and Glu-337. ATP contacts are provided by residues 359–361 (RNE) and 367–368 (HN). Positions 375 and 377 each coordinate substrate. Residues Glu-521 and Glu-528 each coordinate Ca(2+). 528 to 529 (EL) is a binding site for ATP. Residues Asn-531 and Glu-535 each coordinate substrate. 584–587 (GIDR) is a binding site for ATP.

This sequence belongs to the class-II aminoacyl-tRNA synthetase family. Requires Ca(2+) as cofactor.

It is found in the cytoplasm. Its subcellular location is the cytosol. The enzyme catalyses tRNA(Lys) + L-lysine + ATP = L-lysyl-tRNA(Lys) + AMP + diphosphate. Functionally, catalyzes the specific attachment of an amino acid to its cognate tRNA in a 2 step reaction: the amino acid (AA) is first activated by ATP to form AA-AMP and then transferred to the acceptor end of the tRNA. Promotes aminoacylation of non-cognate tRNAs and translational recoding of lysine at nonsense codons. The protein is Lysine--tRNA ligase, cytoplasmic of Arabidopsis thaliana (Mouse-ear cress).